We begin with the raw amino-acid sequence, 1100 residues long: Isoleucine--tRNA ligase (1100 aa).

Positions 48 to 58 (PFATGLPHFGH) match the 'HIGH' region motif. Residues 626-630 (KMSKS) carry the 'KMSKS' region motif. K629 serves as a coordination point for ATP.

This sequence belongs to the class-I aminoacyl-tRNA synthetase family. IleS type 2 subfamily. In terms of assembly, monomer. Zn(2+) is required as a cofactor.

The protein resides in the cytoplasm. It catalyses the reaction tRNA(Ile) + L-isoleucine + ATP = L-isoleucyl-tRNA(Ile) + AMP + diphosphate. In terms of biological role, catalyzes the attachment of isoleucine to tRNA(Ile). As IleRS can inadvertently accommodate and process structurally similar amino acids such as valine, to avoid such errors it has two additional distinct tRNA(Ile)-dependent editing activities. One activity is designated as 'pretransfer' editing and involves the hydrolysis of activated Val-AMP. The other activity is designated 'posttransfer' editing and involves deacylation of mischarged Val-tRNA(Ile). In Treponema denticola (strain ATCC 35405 / DSM 14222 / CIP 103919 / JCM 8153 / KCTC 15104), this protein is Isoleucine--tRNA ligase.